Reading from the N-terminus, the 333-residue chain is Holliday junction branch migration complex subunit RuvB (333 aa).

Residues 1–182 (MEERIVSAEA…FGVMARLEYY (182 aa)) form a large ATPase domain (RuvB-L) region. Residues leucine 21, arginine 22, glycine 63, lysine 66, threonine 67, threonine 68, 129 to 131 (EDF), arginine 172, tyrosine 182, and arginine 219 each bind ATP. Residue threonine 67 coordinates Mg(2+). The segment at 183-253 (KPEELAQIVE…RACSALEQLH (71 aa)) is small ATPAse domain (RuvB-S). The segment at 256 to 333 (PLGLDHIDDK…AHYGVEKQNG (78 aa)) is head domain (RuvB-H). DNA is bound by residues arginine 311 and arginine 316.

The protein belongs to the RuvB family. Homohexamer. Forms an RuvA(8)-RuvB(12)-Holliday junction (HJ) complex. HJ DNA is sandwiched between 2 RuvA tetramers; dsDNA enters through RuvA and exits via RuvB. An RuvB hexamer assembles on each DNA strand where it exits the tetramer. Each RuvB hexamer is contacted by two RuvA subunits (via domain III) on 2 adjacent RuvB subunits; this complex drives branch migration. In the full resolvosome a probable DNA-RuvA(4)-RuvB(12)-RuvC(2) complex forms which resolves the HJ.

The protein localises to the cytoplasm. It catalyses the reaction ATP + H2O = ADP + phosphate + H(+). In terms of biological role, the RuvA-RuvB-RuvC complex processes Holliday junction (HJ) DNA during genetic recombination and DNA repair, while the RuvA-RuvB complex plays an important role in the rescue of blocked DNA replication forks via replication fork reversal (RFR). RuvA specifically binds to HJ cruciform DNA, conferring on it an open structure. The RuvB hexamer acts as an ATP-dependent pump, pulling dsDNA into and through the RuvAB complex. RuvB forms 2 homohexamers on either side of HJ DNA bound by 1 or 2 RuvA tetramers; 4 subunits per hexamer contact DNA at a time. Coordinated motions by a converter formed by DNA-disengaged RuvB subunits stimulates ATP hydrolysis and nucleotide exchange. Immobilization of the converter enables RuvB to convert the ATP-contained energy into a lever motion, pulling 2 nucleotides of DNA out of the RuvA tetramer per ATP hydrolyzed, thus driving DNA branch migration. The RuvB motors rotate together with the DNA substrate, which together with the progressing nucleotide cycle form the mechanistic basis for DNA recombination by continuous HJ branch migration. Branch migration allows RuvC to scan DNA until it finds its consensus sequence, where it cleaves and resolves cruciform DNA. The sequence is that of Holliday junction branch migration complex subunit RuvB from Shouchella clausii (strain KSM-K16) (Alkalihalobacillus clausii).